An 85-amino-acid polypeptide reads, in one-letter code: UPF0181 protein YE1782 (85 aa).

Disordered stretches follow at residues 1–22 (MLAG…RIHQ) and 57–85 (DTDF…PYEG). Residues 9–21 (SHEEQQEAVERIH) show a composition bias toward basic and acidic residues. Acidic residues predominate over residues 74–85 (QDADEIEDPYEG).

This sequence belongs to the UPF0181 family.

In Yersinia enterocolitica serotype O:8 / biotype 1B (strain NCTC 13174 / 8081), this protein is UPF0181 protein YE1782.